A 135-amino-acid chain; its full sequence is Large ribosomal subunit protein eL27x (135 aa).

Belongs to the eukaryotic ribosomal protein eL27 family.

The chain is Large ribosomal subunit protein eL27x (RPL27C) from Arabidopsis thaliana (Mouse-ear cress).